Reading from the N-terminus, the 208-residue chain is Peptidyl-tRNA hydrolase (208 aa).

Tyr-19 provides a ligand contact to tRNA. The active-site Proton acceptor is His-24. TRNA is bound by residues Phe-71, Asn-73, and Asn-119.

Belongs to the PTH family. Monomer.

The protein localises to the cytoplasm. It carries out the reaction an N-acyl-L-alpha-aminoacyl-tRNA + H2O = an N-acyl-L-amino acid + a tRNA + H(+). Its function is as follows. Hydrolyzes ribosome-free peptidyl-tRNAs (with 1 or more amino acids incorporated), which drop off the ribosome during protein synthesis, or as a result of ribosome stalling. Functionally, catalyzes the release of premature peptidyl moieties from peptidyl-tRNA molecules trapped in stalled 50S ribosomal subunits, and thus maintains levels of free tRNAs and 50S ribosomes. This is Peptidyl-tRNA hydrolase from Synechococcus elongatus (strain ATCC 33912 / PCC 7942 / FACHB-805) (Anacystis nidulans R2).